The sequence spans 162 residues: MTAIQHFFKTFFLTELLKGLALTGRYTFRRKFTVQFPEEKTPISPRFRGLHALRRYENGEERCIACKLCEAVCPALAITIESETRADNTRRTTRYDIDLTKCIFCGFCEESCPVDSIVETQILEYHGEKRGDLYFTKEMLLAVGDRYEKDIAAAKAADAPYR.

4Fe-4S ferredoxin-type domains lie at 54-83 (RRYE…IESE) and 93-122 (TRYD…ETQI). [4Fe-4S] cluster is bound by residues Cys-63, Cys-66, Cys-69, Cys-73, Cys-102, Cys-105, Cys-108, and Cys-112.

This sequence belongs to the complex I 23 kDa subunit family. In terms of assembly, NDH-1 is composed of 14 different subunits. Subunits NuoA, H, J, K, L, M, N constitute the membrane sector of the complex. It depends on [4Fe-4S] cluster as a cofactor.

The protein resides in the cell inner membrane. It catalyses the reaction a quinone + NADH + 5 H(+)(in) = a quinol + NAD(+) + 4 H(+)(out). In terms of biological role, NDH-1 shuttles electrons from NADH, via FMN and iron-sulfur (Fe-S) centers, to quinones in the respiratory chain. The immediate electron acceptor for the enzyme in this species is believed to be ubiquinone. Couples the redox reaction to proton translocation (for every two electrons transferred, four hydrogen ions are translocated across the cytoplasmic membrane), and thus conserves the redox energy in a proton gradient. In Burkholderia ambifaria (strain MC40-6), this protein is NADH-quinone oxidoreductase subunit I.